The sequence spans 194 residues: dCTP deaminase (194 aa).

Residues 110-115, Asp-128, 136-138, Tyr-171, Lys-178, and Gln-182 each bind dCTP; these read RSSLAR and VLE. Catalysis depends on Glu-138, which acts as the Proton donor/acceptor.

The protein belongs to the dCTP deaminase family. As to quaternary structure, homotrimer.

It catalyses the reaction dCTP + H2O + H(+) = dUTP + NH4(+). The protein operates within pyrimidine metabolism; dUMP biosynthesis; dUMP from dCTP (dUTP route): step 1/2. Functionally, catalyzes the deamination of dCTP to dUTP. The protein is dCTP deaminase of Histophilus somni (strain 2336) (Haemophilus somnus).